Reading from the N-terminus, the 314-residue chain is Carbamate kinase (314 aa).

Belongs to the carbamate kinase family. Homodimer.

The enzyme catalyses hydrogencarbonate + NH4(+) + ATP = carbamoyl phosphate + ADP + H2O + H(+). Its pathway is metabolic intermediate metabolism; carbamoyl phosphate degradation; CO(2) and NH(3) from carbamoyl phosphate: step 1/1. This Trichomonas vaginalis protein is Carbamate kinase (CBK).